Here is a 297-residue protein sequence, read N- to C-terminus: Syntaxin-4 (297 aa).

The segment covering Met1 to Asp12 has biased composition (basic and acidic residues). The tract at residues Met1–Glu21 is disordered. Over Met1–Phe275 the chain is Cytoplasmic. A phosphoserine mark is found at Ser14 and Ser15. Thr31 carries the post-translational modification Phosphothreonine. 4 positions are modified to phosphoserine: Ser36, Ser117, Ser208, and Ser248. Positions Gln43–Thr163 form a coiled coil. In terms of domain architecture, t-SNARE coiled-coil homology spans Leu200–Ala262. A helical; Anchor for type IV membrane protein transmembrane segment spans residues Ile276–Leu296. Residue Val297 is a topological domain, extracellular.

This sequence belongs to the syntaxin family. Component of the SNARE complex composed of STX4, SNAP23 and VAMP7 that interacts with SYT7 during lysosomal exocytosis. Found in a complex with VAMP8 and SNAP23. Detected in a complex with SNAP23 and STXBP4. Interacts with VAMP2. Interacts with SNAP23 and SNAPIN. Interacts with LLGL1. Interacts (via C-terminus) with CENPF. Interacts with DOC2B. Interacts with STXBP6. Interacts with STXBP3; excludes interaction with DOC2B and SNAP25. Interacts with STXBP4; excludes interaction with VAMP2. Interacts with STXBP5L.

It is found in the cell membrane. It localises to the cell projection. Its subcellular location is the neuron projection. The protein localises to the stereocilium. Its function is as follows. Plasma membrane t-SNARE that mediates docking of transport vesicles. Necessary for the translocation of SLC2A4 from intracellular vesicles to the plasma membrane. In neurons, recruited at neurite tips to membrane domains rich in the phospholipid 1-oleoyl-2-palmitoyl-PC (OPPC) which promotes neurite tip surface expression of the dopamine transporter SLC6A3/DAT by facilitating fusion of SLC6A3-containing transport vesicles with the plasma membrane. Together with STXB3 and VAMP2, may also play a role in docking/fusion of intracellular GLUT4-containing vesicles with the cell surface in adipocytes and in docking of synaptic vesicles at presynaptic active zones. Required for normal hearing. This is Syntaxin-4 (STX4) from Bos taurus (Bovine).